The primary structure comprises 364 residues: Histidinol-phosphate aminotransferase 1 (364 aa).

Lysine 211 is modified (N6-(pyridoxal phosphate)lysine).

This sequence belongs to the class-II pyridoxal-phosphate-dependent aminotransferase family. Histidinol-phosphate aminotransferase subfamily. In terms of assembly, homodimer. It depends on pyridoxal 5'-phosphate as a cofactor.

It catalyses the reaction L-histidinol phosphate + 2-oxoglutarate = 3-(imidazol-4-yl)-2-oxopropyl phosphate + L-glutamate. Its pathway is amino-acid biosynthesis; L-histidine biosynthesis; L-histidine from 5-phospho-alpha-D-ribose 1-diphosphate: step 7/9. In Legionella pneumophila subsp. pneumophila (strain Philadelphia 1 / ATCC 33152 / DSM 7513), this protein is Histidinol-phosphate aminotransferase 1.